The primary structure comprises 81 residues: Photosystem I iron-sulfur center (81 aa).

2 4Fe-4S ferredoxin-type domains span residues 2-31 (SHSV…MIPW) and 39-68 (IASA…VRVY). Residues Cys-11, Cys-14, Cys-17, Cys-21, Cys-48, Cys-51, Cys-54, and Cys-58 each contribute to the [4Fe-4S] cluster site.

In terms of assembly, the eukaryotic PSI reaction center is composed of at least 11 subunits. The cofactor is [4Fe-4S] cluster.

It localises to the plastid. Its subcellular location is the chloroplast thylakoid membrane. The catalysed reaction is reduced [plastocyanin] + hnu + oxidized [2Fe-2S]-[ferredoxin] = oxidized [plastocyanin] + reduced [2Fe-2S]-[ferredoxin]. Functionally, apoprotein for the two 4Fe-4S centers FA and FB of photosystem I (PSI); essential for photochemical activity. FB is the terminal electron acceptor of PSI, donating electrons to ferredoxin. The C-terminus interacts with PsaA/B/D and helps assemble the protein into the PSI complex. Required for binding of PsaD and PsaE to PSI. PSI is a plastocyanin-ferredoxin oxidoreductase, converting photonic excitation into a charge separation, which transfers an electron from the donor P700 chlorophyll pair to the spectroscopically characterized acceptors A0, A1, FX, FA and FB in turn. The sequence is that of Photosystem I iron-sulfur center from Zea mays (Maize).